The sequence spans 389 residues: Chalcone synthase 3 (389 aa).

The active site involves cysteine 164.

It belongs to the thiolase-like superfamily. Chalcone/stilbene synthases family.

It carries out the reaction (E)-4-coumaroyl-CoA + 3 malonyl-CoA + 3 H(+) = 2',4,4',6'-tetrahydroxychalcone + 3 CO2 + 4 CoA. It functions in the pathway secondary metabolite biosynthesis; flavonoid biosynthesis. Functionally, the primary product of this enzyme is 4,2',4',6'-tetrahydroxychalcone (also termed naringenin-chalcone or chalcone) which can under specific conditions spontaneously isomerize into naringenin. The chain is Chalcone synthase 3 (CHS3) from Pisum sativum (Garden pea).